The following is a 259-amino-acid chain: Leucine-rich repeat-containing protein 3B (259 aa).

Residues 1 to 33 form the signal peptide; the sequence is MNLVDLWLTRSLSMCLLLQSFVLMILCFHSASM. In terms of domain architecture, LRRNT spans 34–64; that stretch reads CPKGCLCSSSGGLNVTCSNANLKEIPRDLPP. An N-linked (GlcNAc...) asparagine glycan is attached at Asn-47. LRR repeat units lie at residues 65 to 86, 89 to 110, and 114 to 135; these read ETVL…IFKD, QLRV…AFKG, and TLQT…AFNN. N-linked (GlcNAc...) asparagine glycosylation is present at Asn-94. The 53-residue stretch at 145–197 folds into the LRRCT domain; the sequence is NPWHCDCTLQQVLRSMASNHETAHNVICKTSVLDEHAGRPFLNAANDADLCNL. Residues 205–225 traverse the membrane as a helical segment; sequence AMLVTMFGWFTMVISYVVYYV.

Belongs to the LRRC3 family.

Its subcellular location is the membrane. In Homo sapiens (Human), this protein is Leucine-rich repeat-containing protein 3B (LRRC3B).